The following is a 426-amino-acid chain: Gamma-glutamyl phosphate reductase (426 aa).

This sequence belongs to the gamma-glutamyl phosphate reductase family.

The protein localises to the cytoplasm. The enzyme catalyses L-glutamate 5-semialdehyde + phosphate + NADP(+) = L-glutamyl 5-phosphate + NADPH + H(+). It participates in amino-acid biosynthesis; L-proline biosynthesis; L-glutamate 5-semialdehyde from L-glutamate: step 2/2. Functionally, catalyzes the NADPH-dependent reduction of L-glutamate 5-phosphate into L-glutamate 5-semialdehyde and phosphate. The product spontaneously undergoes cyclization to form 1-pyrroline-5-carboxylate. This is Gamma-glutamyl phosphate reductase from Cupriavidus metallidurans (strain ATCC 43123 / DSM 2839 / NBRC 102507 / CH34) (Ralstonia metallidurans).